Reading from the N-terminus, the 309-residue chain is Taste receptor type 2 member 8 (309 aa).

Residues 1–7 (MFSPADN) lie on the Extracellular side of the membrane. A helical transmembrane segment spans residues 8-28 (IFIILITGEFILGILGNGYIA). Over 29 to 50 (LVNWIDWIKKKKISTIDYILTN) the chain is Cytoplasmic. Residues 51–71 (LVISRICLISVMVVNGIVIAV) form a helical membrane-spanning segment. Over 72–82 (YPDVYTKSKLQ) the chain is Extracellular. Residues 83–103 (IAICTFWTFANYLNMWITTCL) form a helical membrane-spanning segment. At 104 to 131 (NVFYFLKIANSSHPLFLWLKQKIDMVVR) the chain is on the cytoplasmic side. The chain crosses the membrane as a helical span at residues 132-152 (WILLGCFAISLLVSLIAAIVL). Over 153–184 (SYDYRFHAIAKHKRNITEMFHVSKRPYFEPLT) the chain is Extracellular. Residue asparagine 167 is glycosylated (N-linked (GlcNAc...) asparagine). The helical transmembrane segment at 185 to 205 (LFNLFAIVPFIVSLISFFLLV) threads the bilayer. Over 206 to 239 (RSLWRHTKQIKLYATGGRDPSTEVHVRAIKTMTS) the chain is Cytoplasmic. The helical transmembrane segment at 240–260 (FIFLFFLYYISSILVTFSYLM) threads the bilayer. Topologically, residues 261–266 (TKYKLA) are extracellular. Residues 267-287 (VEFGEIVAILYPLGHSLILIV) form a helical membrane-spanning segment. The Cytoplasmic portion of the chain corresponds to 288-309 (LNNKLRQTFVRMLTCRKIACVI).

This sequence belongs to the G-protein coupled receptor T2R family.

Its subcellular location is the membrane. Receptor that may play a role in the perception of bitterness and is gustducin-linked. May play a role in sensing the chemical composition of the gastrointestinal content. The activity of this receptor may stimulate alpha gustducin, mediate PLC-beta-2 activation and lead to the gating of TRPM5. This Gorilla gorilla gorilla (Western lowland gorilla) protein is Taste receptor type 2 member 8 (TAS2R8).